The following is a 131-amino-acid chain: Auxin-responsive protein SAUR77 (131 aa).

The protein belongs to the ARG7 family.

Functionally, may be involved in the regulation of ethylene receptor signaling. Promotes cell expansion and plant growth. This Arabidopsis thaliana (Mouse-ear cress) protein is Auxin-responsive protein SAUR77.